The sequence spans 189 residues: Peptidyl-tRNA hydrolase (189 aa).

Tyr14 provides a ligand contact to tRNA. His19 acts as the Proton acceptor in catalysis. TRNA is bound by residues Tyr64, Asn66, and Asn112.

Belongs to the PTH family. In terms of assembly, monomer.

Its subcellular location is the cytoplasm. The enzyme catalyses an N-acyl-L-alpha-aminoacyl-tRNA + H2O = an N-acyl-L-amino acid + a tRNA + H(+). Its function is as follows. Hydrolyzes ribosome-free peptidyl-tRNAs (with 1 or more amino acids incorporated), which drop off the ribosome during protein synthesis, or as a result of ribosome stalling. In terms of biological role, catalyzes the release of premature peptidyl moieties from peptidyl-tRNA molecules trapped in stalled 50S ribosomal subunits, and thus maintains levels of free tRNAs and 50S ribosomes. This is Peptidyl-tRNA hydrolase from Brevibacillus brevis (strain 47 / JCM 6285 / NBRC 100599).